A 125-amino-acid chain; its full sequence is Small ribosomal subunit protein uS12 (125 aa).

A disordered region spans residues 1-28 (MPTISQLIGSERKRLTRKTKSPALKSCP). The residue at position 89 (Asp-89) is a 3-methylthioaspartic acid. The tract at residues 104-125 (TAGVKDRRQSRSKYGAKAPKNN) is disordered.

This sequence belongs to the universal ribosomal protein uS12 family. Part of the 30S ribosomal subunit. Contacts proteins S8 and S17. May interact with IF1 in the 30S initiation complex.

Functionally, with S4 and S5 plays an important role in translational accuracy. Its function is as follows. Interacts with and stabilizes bases of the 16S rRNA that are involved in tRNA selection in the A site and with the mRNA backbone. Located at the interface of the 30S and 50S subunits, it traverses the body of the 30S subunit contacting proteins on the other side and probably holding the rRNA structure together. The combined cluster of proteins S8, S12 and S17 appears to hold together the shoulder and platform of the 30S subunit. The protein is Small ribosomal subunit protein uS12 of Prochlorococcus marinus (strain MIT 9515).